Consider the following 127-residue polypeptide: Large ribosomal subunit protein bL20 (127 aa).

The protein belongs to the bacterial ribosomal protein bL20 family.

Functionally, binds directly to 23S ribosomal RNA and is necessary for the in vitro assembly process of the 50S ribosomal subunit. It is not involved in the protein synthesizing functions of that subunit. In Bifidobacterium longum (strain NCC 2705), this protein is Large ribosomal subunit protein bL20.